Consider the following 482-residue polypeptide: Cobyric acid synthase (482 aa).

The region spanning 243–430 (ACKVVVPQLE…LHGLFTSDAF (188 aa)) is the GATase cobBQ-type domain. Cysteine 325 (nucleophile) is an active-site residue. Residue histidine 422 is part of the active site.

The protein belongs to the CobB/CobQ family. CobQ subfamily.

Its pathway is cofactor biosynthesis; adenosylcobalamin biosynthesis. Its function is as follows. Catalyzes amidations at positions B, D, E, and G on adenosylcobyrinic A,C-diamide. NH(2) groups are provided by glutamine, and one molecule of ATP is hydrogenolyzed for each amidation. In Ruegeria sp. (strain TM1040) (Silicibacter sp.), this protein is Cobyric acid synthase.